The sequence spans 524 residues: Ribonuclease Y (524 aa).

The chain crosses the membrane as a helical span at residues 3 to 23 (IVINLFLIIFASVVFFAAGFF). Residues 214-274 (ALSVVHIQSD…LRREHAKLTL (61 aa)) form the KH domain. The region spanning 340 to 432 (LLQHSREVAM…VDAANVISLA (93 aa)) is the HD domain.

Belongs to the RNase Y family.

Its subcellular location is the cell membrane. Its function is as follows. Endoribonuclease that initiates mRNA decay. The chain is Ribonuclease Y from Chlorobium luteolum (strain DSM 273 / BCRC 81028 / 2530) (Pelodictyon luteolum).